The following is a 287-amino-acid chain: Undecaprenyl-diphosphatase (287 aa).

The next 7 membrane-spanning stretches (helical) occupy residues 6–26 (LYLI…FIPV), 45–65 (SGKV…MWIF), 85–105 (AFTR…AIFI), 111–131 (VFYH…IMLW), 204–224 (ATEF…TYDL), 238–258 (AIAV…RAVL), and 265–285 (TYRG…AWLM).

It belongs to the UppP family.

It localises to the cell inner membrane. The enzyme catalyses di-trans,octa-cis-undecaprenyl diphosphate + H2O = di-trans,octa-cis-undecaprenyl phosphate + phosphate + H(+). Catalyzes the dephosphorylation of undecaprenyl diphosphate (UPP). Confers resistance to bacitracin. This Bordetella petrii (strain ATCC BAA-461 / DSM 12804 / CCUG 43448) protein is Undecaprenyl-diphosphatase.